The sequence spans 281 residues: Transcription factor bHLH79 (281 aa).

The tract at residues 47–167 (FTRSEHSGNK…GQATDRHSLA (121 aa)) is disordered. 2 stretches are compositionally biased toward basic and acidic residues: residues 77–88 (KTRDLNSEDDSS) and 138–152 (TEQK…DYIH). The bHLH domain maps to 159-209 (QATDRHSLAERARREKISEKMTALQDIIPGCNKIIGKALVLDEIINYIQSL).

As to quaternary structure, homodimer.

It localises to the nucleus. The protein is Transcription factor bHLH79 (BHLH79) of Arabidopsis thaliana (Mouse-ear cress).